A 160-amino-acid polypeptide reads, in one-letter code: Nucleotide-binding protein BP2916 (160 aa).

The protein belongs to the YajQ family.

Its function is as follows. Nucleotide-binding protein. The sequence is that of Nucleotide-binding protein BP2916 from Bordetella pertussis (strain Tohama I / ATCC BAA-589 / NCTC 13251).